Here is a 381-residue protein sequence, read N- to C-terminus: Bifunctional enzyme Fae/Hps (381 aa).

The interval 1–150 (MIKFGEAVLG…KEKYRALHPL (150 aa)) is formaldehyde-activating enzyme. A 3-hexulose-6-phosphate synthase region spans residues 151–381 (VGFRDVRLEY…DEDEDIGEEL (231 aa)).

The protein in the N-terminal section; belongs to the formaldehyde-activating enzyme family. This sequence in the C-terminal section; belongs to the HPS/KGPDC family. HPS subfamily.

The catalysed reaction is 5,6,7,8-tetrahydromethanopterin + formaldehyde = 5,10-methylenetetrahydromethanopterin + H2O. The enzyme catalyses D-ribulose 5-phosphate + formaldehyde = D-arabino-hex-3-ulose 6-phosphate. The protein operates within carbohydrate biosynthesis; D-ribose 5-phosphate biosynthesis. In terms of biological role, catalyzes the condensation of formaldehyde with tetrahydromethanopterin (H(4)MPT) to 5,10-methylenetetrahydromethanopterin. Its function is as follows. Catalyzes the reversible formation of ribulose-5-phosphate and formaldehyde from 3-hexulose-6-phosphate. This is Bifunctional enzyme Fae/Hps from Methanocaldococcus jannaschii (strain ATCC 43067 / DSM 2661 / JAL-1 / JCM 10045 / NBRC 100440) (Methanococcus jannaschii).